Consider the following 287-residue polypeptide: 2-dehydro-3-deoxyphosphooctonate aldolase (287 aa).

This sequence belongs to the KdsA family.

Its subcellular location is the cytoplasm. It carries out the reaction D-arabinose 5-phosphate + phosphoenolpyruvate + H2O = 3-deoxy-alpha-D-manno-2-octulosonate-8-phosphate + phosphate. Its pathway is carbohydrate biosynthesis; 3-deoxy-D-manno-octulosonate biosynthesis; 3-deoxy-D-manno-octulosonate from D-ribulose 5-phosphate: step 2/3. The protein operates within bacterial outer membrane biogenesis; lipopolysaccharide biosynthesis. This Nitrobacter winogradskyi (strain ATCC 25391 / DSM 10237 / CIP 104748 / NCIMB 11846 / Nb-255) protein is 2-dehydro-3-deoxyphosphooctonate aldolase.